The primary structure comprises 212 residues: Octanoyltransferase (212 aa).

The 180-residue stretch at 33–212 (GTAPELVWLL…ATFPEVFGAD (180 aa)) folds into the BPL/LPL catalytic domain. Residues 72–79 (RGGQYTYH), 144–146 (AIG), and 157–159 (GIA) contribute to the substrate site. The Acyl-thioester intermediate role is filled by C175.

The protein belongs to the LipB family.

The protein resides in the cytoplasm. It catalyses the reaction octanoyl-[ACP] + L-lysyl-[protein] = N(6)-octanoyl-L-lysyl-[protein] + holo-[ACP] + H(+). The protein operates within protein modification; protein lipoylation via endogenous pathway; protein N(6)-(lipoyl)lysine from octanoyl-[acyl-carrier-protein]: step 1/2. In terms of biological role, catalyzes the transfer of endogenously produced octanoic acid from octanoyl-acyl-carrier-protein onto the lipoyl domains of lipoate-dependent enzymes. Lipoyl-ACP can also act as a substrate although octanoyl-ACP is likely to be the physiological substrate. The polypeptide is Octanoyltransferase (Paramagnetospirillum magneticum (strain ATCC 700264 / AMB-1) (Magnetospirillum magneticum)).